We begin with the raw amino-acid sequence, 153 residues long: Pheromone-binding protein Gp-9 (153 aa).

The signal sequence occupies residues 1-19 (MKTLILHICIFALVAFASA). 3 disulfides stabilise this stretch: cysteine 37/cysteine 77, cysteine 73/cysteine 129, and cysteine 118/cysteine 138.

Belongs to the PBP/GOBP family. As to quaternary structure, homodimer.

Its subcellular location is the secreted. Its function is as follows. Colony queen number, a major feature of social organization, is associated with worker genotype for Gp-9. Colonies are headed by either a single reproductive queen (monogyne form) or multiple queens (polygyne form). Differences in worker Gp-9 genotypes between social forms may cause differences in workers' abilities to recognize queens and regulate their numbers. This is Pheromone-binding protein Gp-9 from Solenopsis nigella gensterblumi (Fire ant).